The primary structure comprises 311 residues: ATP synthase gamma chain (311 aa).

This sequence belongs to the ATPase gamma chain family. In terms of assembly, F-type ATPases have 2 components, CF(1) - the catalytic core - and CF(0) - the membrane proton channel. CF(1) has five subunits: alpha(3), beta(3), gamma(1), delta(1), epsilon(1). CF(0) has three main subunits: a, b and c.

It is found in the cell membrane. Its function is as follows. Produces ATP from ADP in the presence of a proton gradient across the membrane. The gamma chain is believed to be important in regulating ATPase activity and the flow of protons through the CF(0) complex. The protein is ATP synthase gamma chain of Limosilactobacillus fermentum (strain NBRC 3956 / LMG 18251) (Lactobacillus fermentum).